The sequence spans 1481 residues: Cystic fibrosis transmembrane conductance regulator (1481 aa).

Over 1-77 the chain is Cytoplasmic; the sequence is MQKSPLEKAG…KLINALRRCF (77 aa). A helical membrane pass occupies residues 78–98; sequence FWRFMFYGILLYLGEVTKAVQ. An ABC transmembrane type-1 1 domain is found at 81 to 365; sequence FMFYGILLYL…WAVQTWYDSL (285 aa). Residues 99 to 122 are Extracellular-facing; that stretch reads PLLLGRIIASYDPDNKVERSIAIY. The chain crosses the membrane as a helical span at residues 123–146; sequence LGIGLCLLFVVRTLLLHPAIFGLH. Topologically, residues 147–195 are cytoplasmic; the sequence is HIGMQMRIAMFSLIYKKTLKLSSRVLDKISIGQLISLLSNNLNKFDEGL. Residues 196-216 form a helical membrane-spanning segment; the sequence is ALAHFVWISPLQVTLLMGLLW. Residues 217 to 222 are Extracellular-facing; it reads ELLQAS. A helical transmembrane segment spans residues 223-243; the sequence is AFCGLAFLIVLALVQAGLGRM. Over 244–298 the chain is Cytoplasmic; it reads MMKYRDQRAGKINERLVITSEMIENIQSVKAYCWEEAMEKMIENLRQTELKLTRK. A helical membrane pass occupies residues 299–319; sequence AAYVRYFNSSAFFFSGFFVVF. At 320 to 339 the chain is on the extracellular side; that stretch reads LSVLPYALTKGIILRKIFTT. The helical transmembrane segment at 340 to 358 threads the bilayer; sequence ISFCIVLRMAVTRQFPWAV. The Cytoplasmic segment spans residues 359-858; sequence QTWYDSLGAI…YLRYITVHRS (500 aa). ATP contacts are provided by residues Trp401, Ser434, 458–465, and Gln493; that span reads GSTGAGKT. An ABC transporter 1 domain is found at 423–646; the sequence is NGDNNLFFSN…RPDFSSKLMG (224 aa). Residue Cys524 is the site of S-palmitoyl cysteine attachment. 2 positions are modified to phosphoserine: Ser549 and Ser660. The segment at 654–831 is disordered R region; sequence SAERRNSILT…EEINEEDLKE (178 aa). Ser670 is modified (phosphoserine; by PKA). Position 686 is a phosphoserine (Ser686). Lys688 participates in a covalent cross-link: Glycyl lysine isopeptide (Lys-Gly) (interchain with G-Cter in ubiquitin). Ser700 and Ser712 each carry phosphoserine. The residue at position 717 (Thr717) is a Phosphothreonine. Ser737, Ser768, Ser790, Ser795, and Ser813 each carry phosphoserine. A helical transmembrane segment spans residues 859–879; sequence LIFVLIWCIVIFLAEVAASLV. The 297-residue stretch at 859–1155 folds into the ABC transmembrane type-1 2 domain; it reads LIFVLIWCIV…AVNSSIDVDS (297 aa). Residues 880–918 are Extracellular-facing; it reads VLWLFGNTAPQDKENSTKSGNSSYAVIITNTSSYYFFYI. N-linked (GlcNAc...) asparagine glycans are attached at residues Asn894, Asn900, and Asn909. Residues 919 to 939 form a discontinuously helical membrane-spanning segment; the sequence is YVGVADTLLALGLFRGLPLVH. Residues 940 to 990 lie on the Cytoplasmic side of the membrane; the sequence is TLITVSKILHHKMLHSVLQAPMSTLNTLKAGGILNRFSKDIAILDDLLPLT. Residues 991-1011 form a helical membrane-spanning segment; that stretch reads IFDFIQLLLIVVGAIAVVSVL. Topologically, residues 1012–1013 are extracellular; sequence QP. A helical membrane pass occupies residues 1014-1034; the sequence is YIFLATVPVIAAFILLRAYFL. The Cytoplasmic segment spans residues 1035 to 1095; sequence HTSQQLKQLE…TANWFLYLST (61 aa). A helical transmembrane segment spans residues 1096–1116; that stretch reads LRWFQMRIEMIFVLFFIAVAF. Residues 1117–1130 lie on the Extracellular side of the membrane; it reads ISILTTGEGEGRVG. Residues 1131 to 1151 traverse the membrane as a helical segment; sequence IILTLAMNIMSTLQWAVNSSI. Residues 1152-1481 lie on the Cytoplasmic side of the membrane; the sequence is DVDSLMRSVS…AEEEVQGTRL (330 aa). Residues 1199–1444 form the ABC transporter 2 domain; sequence VKKDDVWPSG…KSLFRQAISS (246 aa). Residues Tyr1220 and 1245–1252 each bind ATP; that span reads GRTGSGKS. Residues 1387–1481 are interaction with GORASP2; it reads RTLKQAFADC…AEEEVQGTRL (95 aa). Cys1396 carries S-palmitoyl cysteine lipidation. A phosphoserine mark is found at Ser1445 and Ser1457. The segment at 1449–1481 is disordered; that stretch reads KLFPHRNSSKHKSRPQITALKEEAEEEVQGTRL. The span at 1450–1462 shows a compositional bias: basic residues; that stretch reads LFPHRNSSKHKSR. The segment covering 1471–1481 has biased composition (acidic residues); that stretch reads EAEEEVQGTRL. Residues 1479–1481 carry the PDZ-binding motif; that stretch reads TRL.

This sequence belongs to the ABC transporter superfamily. ABCC family. CFTR transporter (TC 3.A.1.202) subfamily. As to quaternary structure, monomer; does not require oligomerization for channel activity. May form oligomers in the membrane. Interacts with SLC26A3, SLC26A6 and NHERF1. Interacts with SHANK2. Interacts with MYO6. Interacts (via C-terminus) with GOPC (via PDZ domain); this promotes CFTR internalization and thereby decreases channel activity. Interacts with SLC4A7 through NHERF1. Found in a complex with MYO5B and RAB11A. Interacts with ANO1. Interacts with SLC26A8. Interacts with AHCYL1; the interaction increases CFTR activity. Interacts with CSE1L. The core-glycosylated form interacts with GORASP2 (via PDZ GRASP-type 1 domain) in respone to ER stress. Interacts with MARCHF2; the interaction leads to CFTR ubiqtuitination and degradation. Interacts with ADGRG2. N-glycosylated. In terms of processing, phosphorylated; cAMP treatment promotes phosphorylation and activates the channel. Dephosphorylation decreases the ATPase activity (in vitro). Phosphorylation at PKA sites activates the channel. Phosphorylation at PKC sites enhances the response to phosphorylation by PKA. Phosphorylated by AMPK; this inhibits channel activity. Post-translationally, ubiquitinated, leading to its degradation in the lysosome. Deubiquitination by USP10 in early endosomes enhances its endocytic recycling to the cell membrane. Ubiquitinated by RNF185 during ER stress. Ubiquitinated by MARCHF2. Isoform 1 is expressed in the pancreas. Isoform 2 is specifically expressed in the ventricle.

The protein localises to the apical cell membrane. It localises to the early endosome membrane. Its subcellular location is the cell membrane. It is found in the recycling endosome membrane. The protein resides in the endoplasmic reticulum membrane. The protein localises to the nucleus. It carries out the reaction ATP + H2O + closed Cl(-) channel = ADP + phosphate + open Cl(-) channel.. It catalyses the reaction chloride(in) = chloride(out). The catalysed reaction is hydrogencarbonate(in) = hydrogencarbonate(out). The enzyme catalyses ATP + H2O = ADP + phosphate + H(+). Epithelial ion channel that plays an important role in the regulation of epithelial ion and water transport and fluid homeostasis. Mediates the transport of chloride ions across the cell membrane. Possesses an intrinsic ATPase activity and utilizes ATP to gate its channel; the passive flow of anions through the channel is gated by cycles of ATP binding and hydrolysis by the ATP-binding domains. The ion channel is also permeable to HCO(3)(-); selectivity depends on the extracellular chloride concentration. Exerts its function also by modulating the activity of other ion channels and transporters. Contributes to the regulation of the pH and the ion content of the epithelial fluid layer. Modulates the activity of the epithelial sodium channel (ENaC) complex, in part by regulating the cell surface expression of the ENaC complex. May regulate bicarbonate secretion and salvage in epithelial cells by regulating the transporter SLC4A7. Can inhibit the chloride channel activity of ANO1. Plays a role in the chloride and bicarbonate homeostasis during sperm epididymal maturation and capacitation. The polypeptide is Cystic fibrosis transmembrane conductance regulator (Oryctolagus cuniculus (Rabbit)).